The sequence spans 204 residues: MAIPVVGLTGGIGSGKSAAADRFAELGVPVIDTDSIAHQLTGPGGAAMTEIVRVFGPGVVAGDGSLDRAAMRARVFAAPEERKRLEAILHPAIHAESVRRLQAAVGDYAVLVVPLLFESDRYAPLLARALVVDCSEEVQVERVMRRSKLSADAVRAIMAAQLPRSERLRRADDVIDNSGGLAELRLQVDAKHSYYLANLVKAML.

In terms of domain architecture, DPCK spans 5–204 (VVGLTGGIGS…YLANLVKAML (200 aa)). 13–18 (GSGKSA) contacts ATP.

The protein belongs to the CoaE family.

The protein localises to the cytoplasm. It carries out the reaction 3'-dephospho-CoA + ATP = ADP + CoA + H(+). Its pathway is cofactor biosynthesis; coenzyme A biosynthesis; CoA from (R)-pantothenate: step 5/5. In terms of biological role, catalyzes the phosphorylation of the 3'-hydroxyl group of dephosphocoenzyme A to form coenzyme A. The chain is Dephospho-CoA kinase from Chromobacterium violaceum (strain ATCC 12472 / DSM 30191 / JCM 1249 / CCUG 213 / NBRC 12614 / NCIMB 9131 / NCTC 9757 / MK).